A 502-amino-acid polypeptide reads, in one-letter code: Mannitol 2-dehydrogenase (502 aa).

35–46 (IVHVGVGGFHRA) provides a ligand contact to NAD(+).

The protein belongs to the mannitol dehydrogenase family. As to quaternary structure, monomer.

The enzyme catalyses D-mannitol + NAD(+) = D-fructose + NADH + H(+). In terms of biological role, catalyzes the NAD(H)-dependent interconversion of D-fructose and D-mannitol in the mannitol metabolic pathway. This chain is Mannitol 2-dehydrogenase, found in Pyricularia oryzae (strain 70-15 / ATCC MYA-4617 / FGSC 8958) (Rice blast fungus).